Reading from the N-terminus, the 120-residue chain is Large ribosomal subunit protein uL18 (120 aa).

This sequence belongs to the universal ribosomal protein uL18 family. Part of the 50S ribosomal subunit; part of the 5S rRNA/L5/L18/L25 subcomplex. Contacts the 5S and 23S rRNAs.

Functionally, this is one of the proteins that bind and probably mediate the attachment of the 5S RNA into the large ribosomal subunit, where it forms part of the central protuberance. The chain is Large ribosomal subunit protein uL18 from Finegoldia magna (strain ATCC 29328 / DSM 20472 / WAL 2508) (Peptostreptococcus magnus).